Consider the following 262-residue polypeptide: Transmembrane protein 106A (262 aa).

A helical transmembrane segment spans residues 95-115 (FVFLAVLICLVTSSFIVFFLF).

It belongs to the TMEM106 family. As to expression, expressed in renal cells (at protein level). Expressed in epithelial cells.

It is found in the cell membrane. In terms of biological role, activates macrophages and polarizes them into M1-like macrophages through the activation of the MAPK and NF-kappaB signaling pathway. Upon activation, up-regulates the expression of CD80, CD86, CD69 and MHC II on macrophages, and induces the release of pro-inflammatory cytokines such as TNF, IL1B, IL6, CCL2 and nitric oxide. May play a role in inhibition of proliferation and migration. The protein is Transmembrane protein 106A (TMEM106A) of Homo sapiens (Human).